Reading from the N-terminus, the 138-residue chain is Transcription antitermination protein NusB (138 aa).

This sequence belongs to the NusB family.

Its function is as follows. Involved in transcription antitermination. Required for transcription of ribosomal RNA (rRNA) genes. Binds specifically to the boxA antiterminator sequence of the ribosomal RNA (rrn) operons. The sequence is that of Transcription antitermination protein NusB from Yersinia enterocolitica serotype O:8 / biotype 1B (strain NCTC 13174 / 8081).